A 169-amino-acid polypeptide reads, in one-letter code: MTERAILAGGCFWGMQDLIRKRPGVLRTRVGYTGGDVPNATYRNHGSHAEAIEIEFDPSRIGYRDLLEFFFQIHDPSTANRQGNDVGASYRSAIFYEDEEQRRVAEETIAEVDASGLWSGKVVTEVSPAGPFWEAGPEHQDYLERIPWGYTCHFPRPGWTLPKREAAGD.

C11 is a catalytic residue.

The protein belongs to the MsrA Met sulfoxide reductase family.

The catalysed reaction is L-methionyl-[protein] + [thioredoxin]-disulfide + H2O = L-methionyl-(S)-S-oxide-[protein] + [thioredoxin]-dithiol. It carries out the reaction [thioredoxin]-disulfide + L-methionine + H2O = L-methionine (S)-S-oxide + [thioredoxin]-dithiol. Functionally, has an important function as a repair enzyme for proteins that have been inactivated by oxidation. Catalyzes the reversible oxidation-reduction of methionine sulfoxide in proteins to methionine. In Leifsonia xyli subsp. xyli (strain CTCB07), this protein is Peptide methionine sulfoxide reductase MsrA.